A 183-amino-acid chain; its full sequence is Probable transcription termination protein NusA (183 aa).

A KH domain is found at 32-98 (DERVAFIVKE…DDVWVKRVGK (67 aa)). A disordered region spans residues 149-183 (RKRAKRPVVKDQQQEQTETKQETDVQQDVKETVKE). Residues 156–183 (VVKDQQQEQTETKQETDVQQDVKETVKE) are compositionally biased toward basic and acidic residues.

It belongs to the NusA family.

The protein localises to the cytoplasm. In terms of biological role, participates in transcription termination. In Methanocaldococcus jannaschii (strain ATCC 43067 / DSM 2661 / JAL-1 / JCM 10045 / NBRC 100440) (Methanococcus jannaschii), this protein is Probable transcription termination protein NusA.